The chain runs to 154 residues: Anaerobic ribonucleoside-triphosphate reductase-activating protein (154 aa).

The [4Fe-4S] cluster site is built by cysteine 26, cysteine 30, and cysteine 33. Residues 32–34 and glycine 74 contribute to the S-adenosyl-L-methionine site; that span reads GCY.

Belongs to the organic radical-activating enzymes family. As to quaternary structure, forms a tetramer composed of two NrdD and two NrdG subunits. [4Fe-4S] cluster serves as cofactor.

Its subcellular location is the cytoplasm. It carries out the reaction glycyl-[protein] + reduced [flavodoxin] + S-adenosyl-L-methionine = glycin-2-yl radical-[protein] + semiquinone [flavodoxin] + 5'-deoxyadenosine + L-methionine + H(+). Activation of anaerobic ribonucleoside-triphosphate reductase under anaerobic conditions by generation of an organic free radical, using S-adenosylmethionine and reduced flavodoxin as cosubstrates to produce 5'-deoxy-adenosine. In Salmonella typhi, this protein is Anaerobic ribonucleoside-triphosphate reductase-activating protein (nrdG).